The sequence spans 205 residues: Cyanate hydratase (205 aa).

Catalysis depends on residues Arg133, Glu136, and Ser159.

It belongs to the cyanase family.

The enzyme catalyses cyanate + hydrogencarbonate + 3 H(+) = NH4(+) + 2 CO2. In terms of biological role, catalyzes the reaction of cyanate with bicarbonate to produce ammonia and carbon dioxide. The polypeptide is Cyanate hydratase (Thalassiosira pseudonana (Marine diatom)).